The following is a 404-amino-acid chain: Cysteine desulfurase IscS (404 aa).

Residues Ala-75–Thr-76, Asn-155, Gln-183, and Ser-203–His-205 contribute to the pyridoxal 5'-phosphate site. N6-(pyridoxal phosphate)lysine is present on Lys-206. Thr-243 is a binding site for pyridoxal 5'-phosphate. Cys-328 serves as the catalytic Cysteine persulfide intermediate. Residue Cys-328 participates in [2Fe-2S] cluster binding.

It belongs to the class-V pyridoxal-phosphate-dependent aminotransferase family. NifS/IscS subfamily. As to quaternary structure, homodimer. Forms a heterotetramer with IscU, interacts with other sulfur acceptors. Requires pyridoxal 5'-phosphate as cofactor.

Its subcellular location is the cytoplasm. The enzyme catalyses (sulfur carrier)-H + L-cysteine = (sulfur carrier)-SH + L-alanine. It participates in cofactor biosynthesis; iron-sulfur cluster biosynthesis. Its function is as follows. Master enzyme that delivers sulfur to a number of partners involved in Fe-S cluster assembly, tRNA modification or cofactor biosynthesis. Catalyzes the removal of elemental sulfur atoms from cysteine to produce alanine. Functions as a sulfur delivery protein for Fe-S cluster synthesis onto IscU, an Fe-S scaffold assembly protein, as well as other S acceptor proteins. This Actinobacillus succinogenes (strain ATCC 55618 / DSM 22257 / CCUG 43843 / 130Z) protein is Cysteine desulfurase IscS.